The primary structure comprises 310 residues: Isoflavone reductase homolog A622 (310 aa).

NADP(+)-binding positions include 13–19, Arg-38, and Lys-47; that span reads GGTGYIG. Lys-135 acts as the Proton acceptor in catalysis. Arg-139 provides a ligand contact to NADP(+).

It belongs to the NmrA-type oxidoreductase family. Isoflavone reductase subfamily. In terms of assembly, monomer. As to expression, expressed in roots and stems.

The protein resides in the cytoplasm. It participates in alkaloid biosynthesis; nicotine biosynthesis. NADPH-binding protein. Involved in the biosynthesis of pyridine alkaloid natural products, leading mainly to the production of anabasine, anatabine, nicotine and nornicotine, effective deterrents against herbivores with antiparasitic and pesticide properties (neurotoxins); nornicotine serves as the precursor in the synthesis of the carcinogen compound N'-nitrosonornicotine (NNN). Reductase involved in a late step of tobacco alkaloid biosynthesis. Triggers either the formation of a nicotinic acid-derived precursor or the final condensation reaction of tobacco alkaloids. This is Isoflavone reductase homolog A622 from Nicotiana sylvestris (Wood tobacco).